The chain runs to 175 residues: NADH-ubiquinone oxidoreductase chain 6 (175 aa).

5 consecutive transmembrane segments (helical) span residues 1–21 (MVTY…VGVS), 25–45 (SPIY…GVVL), 47–67 (FGGS…MLVV), 88–108 (VVLG…IYAL), and 149–169 (YGVW…VIIM).

The protein belongs to the complex I subunit 6 family. Core subunit of respiratory chain NADH dehydrogenase (Complex I) which is composed of 45 different subunits.

The protein localises to the mitochondrion inner membrane. The catalysed reaction is a ubiquinone + NADH + 5 H(+)(in) = a ubiquinol + NAD(+) + 4 H(+)(out). Functionally, core subunit of the mitochondrial membrane respiratory chain NADH dehydrogenase (Complex I) which catalyzes electron transfer from NADH through the respiratory chain, using ubiquinone as an electron acceptor. Essential for the catalytic activity and assembly of complex I. This is NADH-ubiquinone oxidoreductase chain 6 (MT-ND6) from Balaenoptera musculus (Blue whale).